The chain runs to 158 residues: Transcription elongation factor GreB (158 aa).

The protein belongs to the GreA/GreB family. GreB subfamily.

Necessary for efficient RNA polymerase transcription elongation past template-encoded arresting sites. The arresting sites in DNA have the property of trapping a certain fraction of elongating RNA polymerases that pass through, resulting in locked ternary complexes. Cleavage of the nascent transcript by cleavage factors such as GreA or GreB allows the resumption of elongation from the new 3'terminus. GreB releases sequences of up to 9 nucleotides in length. This is Transcription elongation factor GreB from Escherichia coli O157:H7.